The sequence spans 118 residues: Transcription factor PAR2 (118 aa).

A disordered region spans residues 1 to 59 (MEKTLATSHTKRSSPPSPSSAVNTSSTGFNRRTRQRLSDATASVSETDVEDEDEDEEGV). The span at 19-30 (SSAVNTSSTGFN) shows a compositional bias: polar residues. Positions 43 to 92 (SVSETDVEDEDEDEEGVEEKIEALQTIVPGGTELGVDALFEETASYILAL) constitute a bHLH domain. Over residues 47-59 (TDVEDEDEDEEGV) the composition is skewed to acidic residues.

It belongs to the bHLH protein family. Homodimer.

It localises to the nucleus. Its function is as follows. Atypical bHLH transcription factor that acts as a negative regulator of a variety of shade avoidance syndrome (SAS) responses, including seedling elongation and photosynthetic pigment accumulation. Acts as a direct transcriptional repressor of two auxin-responsive genes, SAUR15 and SAUR68. May function in integrating shade and hormone transcriptional networks in response to light and auxin changes. In Arabidopsis thaliana (Mouse-ear cress), this protein is Transcription factor PAR2 (PAR2).